Reading from the N-terminus, the 147-residue chain is Monothiol glutaredoxin-S5 (147 aa).

The region spanning Ala49 to Trp146 is the Glutaredoxin domain. Residue Cys69 coordinates [2Fe-2S] cluster. Residues Ala144–Leu147 carry the Responsive for interaction with TGA factors motif.

It belongs to the glutaredoxin family. CC-type subfamily.

It localises to the cytoplasm. It is found in the nucleus. In terms of biological role, may only reduce GSH-thiol disulfides, but not protein disulfides. The protein is Monothiol glutaredoxin-S5 (GRXS5) of Oryza sativa subsp. japonica (Rice).